The following is a 574-amino-acid chain: Putative ABC transporter ATP-binding protein VVA0347 (574 aa).

2 consecutive ABC transporter domains span residues 3-244 and 299-533; these read IEFS…GIRE and LDVR…ANLT. ATP is bound by residues 37–44 and 332–339; these read GPSGSGKS and GKNGSGKS.

This sequence belongs to the ABC transporter superfamily.

It is found in the cell inner membrane. In terms of biological role, probably part of an ABC transporter complex. Responsible for energy coupling to the transport system. This is Putative ABC transporter ATP-binding protein VVA0347 from Vibrio vulnificus (strain YJ016).